Consider the following 252-residue polypeptide: Carbonic anhydrase (252 aa).

The N-terminal stretch at 1-26 (MPRFPRTLPRLTAVLLLACTAFSAAA) is a signal peptide. The Alpha-carbonic anhydrase domain occupies 31–252 (THWGYTGHDS…QPLNARVVIE (222 aa)). A disulfide bond links Cys-54 and Cys-207. His-92 functions as the Proton acceptor in the catalytic mechanism. Residues His-118, His-120, and His-137 each contribute to the Zn(2+) site. Substrate is bound at residue 203–204 (TT).

The protein belongs to the alpha-carbonic anhydrase family. In terms of assembly, homodimer. Zn(2+) serves as cofactor.

The protein resides in the periplasm. It carries out the reaction hydrogencarbonate + H(+) = CO2 + H2O. Reversible hydration of carbon dioxide. This chain is Carbonic anhydrase (cah), found in Neisseria gonorrhoeae.